Reading from the N-terminus, the 397-residue chain is Acetate kinase (397 aa).

N7 serves as a coordination point for Mg(2+). K14 is a binding site for ATP. Residue R91 participates in substrate binding. Residue D148 is the Proton donor/acceptor of the active site. ATP contacts are provided by residues 208–212 (HLGNG), 283–285 (DFR), and 331–335 (GLGEN). E383 serves as a coordination point for Mg(2+).

Belongs to the acetokinase family. In terms of assembly, homodimer. It depends on Mg(2+) as a cofactor. The cofactor is Mn(2+).

The protein resides in the cytoplasm. It catalyses the reaction acetate + ATP = acetyl phosphate + ADP. It functions in the pathway metabolic intermediate biosynthesis; acetyl-CoA biosynthesis; acetyl-CoA from acetate: step 1/2. Catalyzes the formation of acetyl phosphate from acetate and ATP. Can also catalyze the reverse reaction. This is Acetate kinase from Heliobacterium modesticaldum (strain ATCC 51547 / Ice1).